The following is a 724-amino-acid chain: Ribosomal RNA large subunit methyltransferase K/L (724 aa).

Residues 42-153 enclose the THUMP domain; it reads DAQRLVLWSR…KGRATLSVDL (112 aa).

The protein belongs to the methyltransferase superfamily. RlmKL family.

The protein localises to the cytoplasm. The enzyme catalyses guanosine(2445) in 23S rRNA + S-adenosyl-L-methionine = N(2)-methylguanosine(2445) in 23S rRNA + S-adenosyl-L-homocysteine + H(+). It carries out the reaction guanosine(2069) in 23S rRNA + S-adenosyl-L-methionine = N(2)-methylguanosine(2069) in 23S rRNA + S-adenosyl-L-homocysteine + H(+). In terms of biological role, specifically methylates the guanine in position 2445 (m2G2445) and the guanine in position 2069 (m7G2069) of 23S rRNA. This is Ribosomal RNA large subunit methyltransferase K/L from Xylella fastidiosa (strain M12).